The sequence spans 358 residues: DNA integrity scanning protein DisA (358 aa).

One can recognise a DAC domain in the interval 6 to 144 (RPTLREAVAR…RGERHVLTDS (139 aa)). ATP is bound by residues glycine 73, leucine 91, and 104–108 (TRHRS).

This sequence belongs to the DisA family. In terms of assembly, homooctamer. The cofactor is Mg(2+).

It carries out the reaction 2 ATP = 3',3'-c-di-AMP + 2 diphosphate. In terms of biological role, participates in a DNA-damage check-point. DisA forms globular foci that rapidly scan along the chromosomes searching for lesions. Functionally, also has diadenylate cyclase activity, catalyzing the condensation of 2 ATP molecules into cyclic di-AMP (c-di-AMP). c-di-AMP likely acts as a signaling molecule that may couple DNA integrity with a cellular process. The sequence is that of DNA integrity scanning protein DisA from Mycobacterium bovis (strain ATCC BAA-935 / AF2122/97).